The chain runs to 310 residues: N-acetyl-gamma-glutamyl-phosphate reductase (310 aa).

C117 is a catalytic residue.

Belongs to the NAGSA dehydrogenase family. Type 2 subfamily.

The protein localises to the cytoplasm. The enzyme catalyses N-acetyl-L-glutamate 5-semialdehyde + phosphate + NADP(+) = N-acetyl-L-glutamyl 5-phosphate + NADPH + H(+). It functions in the pathway amino-acid biosynthesis; L-arginine biosynthesis; N(2)-acetyl-L-ornithine from L-glutamate: step 3/4. Its function is as follows. Catalyzes the NADPH-dependent reduction of N-acetyl-5-glutamyl phosphate to yield N-acetyl-L-glutamate 5-semialdehyde. This is N-acetyl-gamma-glutamyl-phosphate reductase from Brucella abortus (strain S19).